We begin with the raw amino-acid sequence, 199 residues long: Imidazoleglycerol-phosphate dehydratase (199 aa).

Belongs to the imidazoleglycerol-phosphate dehydratase family.

It is found in the cytoplasm. The enzyme catalyses D-erythro-1-(imidazol-4-yl)glycerol 3-phosphate = 3-(imidazol-4-yl)-2-oxopropyl phosphate + H2O. The protein operates within amino-acid biosynthesis; L-histidine biosynthesis; L-histidine from 5-phospho-alpha-D-ribose 1-diphosphate: step 6/9. The chain is Imidazoleglycerol-phosphate dehydratase from Acidithiobacillus ferrooxidans (strain ATCC 53993 / BNL-5-31) (Leptospirillum ferrooxidans (ATCC 53993)).